The chain runs to 159 residues: Cyclic pyranopterin monophosphate synthase (159 aa).

Residues 76–78 and 114–115 each bind substrate; these read LCH and ME. Aspartate 129 is a catalytic residue.

The protein belongs to the MoaC family. Homohexamer; trimer of dimers.

It carries out the reaction (8S)-3',8-cyclo-7,8-dihydroguanosine 5'-triphosphate = cyclic pyranopterin phosphate + diphosphate. It participates in cofactor biosynthesis; molybdopterin biosynthesis. Functionally, catalyzes the conversion of (8S)-3',8-cyclo-7,8-dihydroguanosine 5'-triphosphate to cyclic pyranopterin monophosphate (cPMP). The sequence is that of Cyclic pyranopterin monophosphate synthase from Oleidesulfovibrio alaskensis (strain ATCC BAA-1058 / DSM 17464 / G20) (Desulfovibrio alaskensis).